The following is a 450-amino-acid chain: Solute carrier family 52, riboflavin transporter, member 2 (450 aa).

5 consecutive transmembrane segments (helical) span residues 14-34 (LLVA…WVEL), 47-67 (LPSY…LVTL), 86-106 (GLGI…APVA), 112-132 (VAFL…NVTF), and 147-167 (FFLG…GQGV). The N-linked (GlcNAc...) asparagine glycan is linked to Asn178. The helical transmembrane segment at 201–221 (FFWVLTALLGTSAAAFQGLLL) threads the bilayer. Over residues 227 to 236 (TSEPTTGTGL) the composition is skewed to low complexity. The segment at 227-264 (TSEPTTGTGLRVETPGTEEEEEEEEASPLQEPPGQVAG) is disordered. Over residues 242 to 252 (GTEEEEEEEEA) the composition is skewed to acidic residues. 5 helical membrane-spanning segments follow: residues 282–302 (ACLL…LPAV), 317–337 (LAVV…MAVL), 344–364 (LCGL…LAAL), 369–389 (PLVG…LCAG), and 409–429 (ALLA…VAMF).

Belongs to the riboflavin transporter family.

The protein resides in the cell membrane. It carries out the reaction riboflavin(in) = riboflavin(out). With respect to regulation, riboflavin transport is Na(+)-independent but moderately pH-sensitive. Activity is strongly inhibited by riboflavin analogs, such as lumiflavin. Weakly inhibited by flavin adenine dinucleotide (FAD) and flavin mononucleotide (FMN). Functionally, plasma membrane transporter mediating the uptake by cells of the water soluble vitamin B2/riboflavin that plays a key role in biochemical oxidation-reduction reactions of the carbohydrate, lipid, and amino acid metabolism. May also act as a receptor for 4-hydroxybutyrate. This is Solute carrier family 52, riboflavin transporter, member 2 (Slc52a2) from Mus musculus (Mouse).